We begin with the raw amino-acid sequence, 1161 residues long: DNA-directed RNA polymerase III subunit 2 (1161 aa).

The C4-type zinc finger occupies 1104-1125; the sequence is CRACGLLGYYNYKLKKAVCTTC.

Belongs to the RNA polymerase beta chain family. In terms of assembly, component of the RNA polymerase III (Pol III) complex consisting of 17 subunits.

Its subcellular location is the nucleus. It carries out the reaction RNA(n) + a ribonucleoside 5'-triphosphate = RNA(n+1) + diphosphate. In terms of biological role, DNA-dependent RNA polymerase catalyzes the transcription of DNA into RNA using the four ribonucleoside triphosphates as substrates. Second largest core component of RNA polymerase III which synthesizes small RNAs, such as 5S rRNA and tRNAs. Proposed to contribute to the polymerase catalytic activity and forms the polymerase active center together with the largest subunit. Pol III is composed of mobile elements and NRPC2 is part of the core element with the central large cleft and probably a clamp element that moves to open and close the cleft. Essential for the completion of the three rounds of mitosis in female megaspores required for the development of mature gametophytes. In Arabidopsis thaliana (Mouse-ear cress), this protein is DNA-directed RNA polymerase III subunit 2.